The chain runs to 217 residues: Flagellin B1 (217 aa).

The propeptide occupies 1-12 (MKVFEFLKGKRG).

It belongs to the archaeal flagellin family.

It localises to the archaeal flagellum. Its function is as follows. Flagellin is the subunit protein which polymerizes to form the filaments of archaeal flagella. The protein is Flagellin B1 (flaB1) of Methanocaldococcus jannaschii (strain ATCC 43067 / DSM 2661 / JAL-1 / JCM 10045 / NBRC 100440) (Methanococcus jannaschii).